Consider the following 192-residue polypeptide: Inosine triphosphate pyrophosphatase (192 aa).

10 to 15 (TGNANK) lines the ITP pocket. Glu-46 is a binding site for Mg(2+). ITP contacts are provided by residues Lys-58, 74 to 75 (DT), Lys-91, 149 to 152 (FGWD), Lys-172, and 177 to 178 (HR).

The protein belongs to the HAM1 NTPase family. As to quaternary structure, homodimer. Requires Mg(2+) as cofactor. It depends on Mn(2+) as a cofactor.

The protein resides in the cytoplasm. The protein localises to the nucleus. It catalyses the reaction ITP + H2O = IMP + diphosphate + H(+). The catalysed reaction is dITP + H2O = dIMP + diphosphate + H(+). The enzyme catalyses XTP + H2O = XMP + diphosphate + H(+). In terms of biological role, pyrophosphatase that hydrolyzes non-canonical purine nucleotides such as inosine triphosphate (ITP), deoxyinosine triphosphate (dITP) or xanthosine 5'-triphosphate (XTP) to their respective monophosphate derivatives. The enzyme does not distinguish between the deoxy- and ribose forms. Probably excludes non-canonical purines from RNA and DNA precursor pools, thus preventing their incorporation into RNA and DNA and avoiding chromosomal lesions. This Puccinia graminis f. sp. tritici (strain CRL 75-36-700-3 / race SCCL) (Black stem rust fungus) protein is Inosine triphosphate pyrophosphatase.